The chain runs to 171 residues: Translation initiation factor IF-3 (171 aa).

This sequence belongs to the IF-3 family. As to quaternary structure, monomer.

The protein localises to the cytoplasm. IF-3 binds to the 30S ribosomal subunit and shifts the equilibrium between 70S ribosomes and their 50S and 30S subunits in favor of the free subunits, thus enhancing the availability of 30S subunits on which protein synthesis initiation begins. The polypeptide is Translation initiation factor IF-3 (Thermus thermophilus (strain ATCC BAA-163 / DSM 7039 / HB27)).